A 1154-amino-acid polypeptide reads, in one-letter code: Diacylglycerol kinase eta (1154 aa).

A disordered region spans residues Met1–Gln54. Positions Thr59–Ser152 constitute a PH domain. Phorbol-ester/DAG-type zinc fingers lie at residues Met169–Cys219 and Pro241–Cys292. The DAGKc domain maps to Phe322–Glu457. Disordered regions lie at residues Gln560–Pro608, Asp634–Ala678, and Phe1123–Asn1154. Residues Pro573–Leu586 show a composition bias toward acidic residues. The span at Asp656–Pro667 shows a compositional bias: basic and acidic residues. A compositionally biased stretch (polar residues) spans Gln1131 to Asn1154.

Belongs to the eukaryotic diacylglycerol kinase family. Interacts with RAF1 and BRAF. Post-translationally, phosphorylated. Phosphorylation does not inhibit catalytic activity. As to expression, expressed in a wide variety of tissues. Most abundant in the brain and testis; also found in lung, spleen, and prostate (at protein level).

It is found in the cytoplasm. Its subcellular location is the cell membrane. It catalyses the reaction a 1,2-diacyl-sn-glycerol + ATP = a 1,2-diacyl-sn-glycero-3-phosphate + ADP + H(+). The enzyme catalyses 1,2-di-(9Z-octadecenoyl)-sn-glycerol + ATP = 1,2-di-(9Z-octadecenoyl)-sn-glycero-3-phosphate + ADP + H(+). It participates in lipid metabolism; glycerolipid metabolism. Functionally, diacylglycerol kinase that converts diacylglycerol/DAG into phosphatidic acid/phosphatidate/PA and regulates the respective levels of these two bioactive lipids. Thereby, acts as a central switch between the signaling pathways activated by these second messengers with different cellular targets and opposite effects in numerous biological processes. Plays a key role in promoting cell growth. Activates the Ras/B-Raf/C-Raf/MEK/ERK signaling pathway induced by EGF. Regulates the recruitment of RAF1 and BRAF from cytoplasm to membranes and their heterodimerization. The sequence is that of Diacylglycerol kinase eta (DGKH) from Mesocricetus auratus (Golden hamster).